Here is a 553-residue protein sequence, read N- to C-terminus: Phospholipase B (553 aa).

The first 35 residues, 1 to 35, serve as a signal peptide directing secretion; the sequence is MIRFGNPSSSDKRRQRCRSWYWGGLLLLWAVAETR. N-linked (GlcNAc...) asparagine glycosylation is found at Asn313, Asn416, and Asn531.

Belongs to the phospholipase B-like family. Expressed by the venom gland.

The protein localises to the secreted. Its function is as follows. May cause hemolysis or may be involved in protein folding and translation. In Crotalus adamanteus (Eastern diamondback rattlesnake), this protein is Phospholipase B.